A 969-amino-acid chain; its full sequence is Leucine--tRNA ligase (969 aa).

A disordered region spans residues 1 to 23; sequence MTESPTTSPATGSGAAAPDSDAP. The short motif at 78–89 is the 'HIGH' region element; the sequence is PYPSGEGLHVGH. The 'KMSKS' region signature appears at 737-741; that stretch reads KIGKS. An ATP-binding site is contributed by lysine 740.

The protein belongs to the class-I aminoacyl-tRNA synthetase family.

Its subcellular location is the cytoplasm. The catalysed reaction is tRNA(Leu) + L-leucine + ATP = L-leucyl-tRNA(Leu) + AMP + diphosphate. This chain is Leucine--tRNA ligase, found in Mycolicibacterium paratuberculosis (strain ATCC BAA-968 / K-10) (Mycobacterium paratuberculosis).